The sequence spans 223 residues: Small ribosomal subunit protein uS3 (223 aa).

The 77-residue stretch at I39–K115 folds into the KH type-2 domain.

It belongs to the universal ribosomal protein uS3 family. As to quaternary structure, part of the 30S ribosomal subunit. Forms a tight complex with proteins S10 and S14.

In terms of biological role, binds the lower part of the 30S subunit head. Binds mRNA in the 70S ribosome, positioning it for translation. In Leuconostoc mesenteroides subsp. mesenteroides (strain ATCC 8293 / DSM 20343 / BCRC 11652 / CCM 1803 / JCM 6124 / NCDO 523 / NBRC 100496 / NCIMB 8023 / NCTC 12954 / NRRL B-1118 / 37Y), this protein is Small ribosomal subunit protein uS3.